The following is a 424-amino-acid chain: MGCGTSKVLPEPPKDVQLDLVKKVEPFSGTKSDVYKHFITEVDSVGPVKAGFPAASQYAHPCPGPPTAGHTEPPSEPPRRARVAKYRAKFDPRVTAKYDIKALIGRGSFSRVVRVEHRATRQPYAIKMIETKYREGREVCESELRVLRRVRHANIIQLVEVFETQERVYMVMELATGGELFDRIIAKGSFTERDATRVLQMVLDGVRYLHALGITHRDLKPENLLYYHPGTDSKIIITDFGLASARKKGDDCLMKTTCGTPEYIAPEVLVRKPYTNSVDMWALGVIAYILLSGTMPFEDDNRTRLYRQILRGKYSYSGEPWPSVSNLAKDFIDRLLTVDPGARMTALQALRHPWVVSMAASSSMKNLHRSISQNLLKRASSRCQSTKSAQSTRSSRSTRSNKSRRVRERELRELNLRYQQQYNG.

The N-myristoyl glycine moiety is linked to residue glycine 2. Cysteine 3 is lipidated: S-palmitoyl cysteine. A disordered region spans residues 56 to 80 (SQYAHPCPGPPTAGHTEPPSEPPRR). Positions 98–355 (YDIKALIGRG…ALQALRHPWV (258 aa)) constitute a Protein kinase domain. ATP-binding positions include 104–112 (IGRGSFSRV) and lysine 127. Aspartate 218 (proton acceptor) is an active-site residue. The interval 378 to 407 (RASSRCQSTKSAQSTRSSRSTRSNKSRRVR) is disordered. 2 positions are modified to phosphoserine; by autocatalysis: serine 380 and serine 381. Residues 385–398 (STKSAQSTRSSRST) are compositionally biased toward low complexity.

It belongs to the protein kinase superfamily. CAMK Ser/Thr protein kinase family. In terms of assembly, homodimer. Post-translationally, autophosphorylated on serine residues. Myristoylated. Required for membrane association. Prerequisite for palmitoylation to occur. In terms of processing, palmitoylated. Expressed in all tissues and cell lines tested with the highest level of abundance in testis.

It is found in the golgi apparatus. Its subcellular location is the cytoplasm. The protein localises to the cytoskeleton. The protein resides in the microtubule organizing center. It localises to the centrosome. It is found in the nucleus speckle. Its subcellular location is the endoplasmic reticulum membrane. The protein localises to the cell membrane. The enzyme catalyses L-seryl-[protein] + ATP = O-phospho-L-seryl-[protein] + ADP + H(+). The catalysed reaction is L-threonyl-[protein] + ATP = O-phospho-L-threonyl-[protein] + ADP + H(+). Its activity is regulated as follows. Activity depends on Ca(2+) concentration. Serine/threonine protein kinase that may be involved in the regulation of pre-mRNA processing. It may phosphorylate components of nuclear splice factor compartments (SFC), such as non-snRNP splicing factors containing a serine/arginine-rich domain (SR proteins). Reversible phosphorylation of SR proteins may cause their release into the nucleoplasm and change their local concentration, thereby influencing alternative splicing. The polypeptide is Serine/threonine-protein kinase H1 (PSKH1) (Homo sapiens (Human)).